The following is a 191-amino-acid chain: Molybdenum cofactor guanylyltransferase (191 aa).

GTP is bound by residues 13–15 (LAG), Lys-26, Asp-72, and Asp-102. A Mg(2+)-binding site is contributed by Asp-102.

Belongs to the MobA family. In terms of assembly, monomer. Mg(2+) serves as cofactor.

The protein localises to the cytoplasm. It carries out the reaction Mo-molybdopterin + GTP + H(+) = Mo-molybdopterin guanine dinucleotide + diphosphate. In terms of biological role, transfers a GMP moiety from GTP to Mo-molybdopterin (Mo-MPT) cofactor (Moco or molybdenum cofactor) to form Mo-molybdopterin guanine dinucleotide (Mo-MGD) cofactor. The chain is Molybdenum cofactor guanylyltransferase from Pseudomonas putida (strain ATCC 700007 / DSM 6899 / JCM 31910 / BCRC 17059 / LMG 24140 / F1).